A 472-amino-acid polypeptide reads, in one-letter code: Cannabinoid receptor 1 (472 aa).

Over 1–116 (MKSILDGLAD…CFMVLNPSQQ (116 aa)) the chain is Extracellular. The required for mitochondrial localization stretch occupies residues 2 to 23 (KSILDGLADTTFRTITTDLLYV). N-linked (GlcNAc...) asparagine glycans are attached at residues asparagine 77 and asparagine 83. The helical transmembrane segment at 117–142 (LAIAVLSLTLGTFTVLENLLVLCVIL) threads the bilayer. Residues 143–154 (HSRSLRCRPSYH) lie on the Cytoplasmic side of the membrane. A helical membrane pass occupies residues 155–175 (FIGSLAVADLLGSVIFVYSFI). The Extracellular portion of the chain corresponds to 176-187 (DFHVFHRKDSRN). Residues 188–212 (VFLFKLGGVTASFTASVGSLFLTAI) form a helical membrane-spanning segment. The Cytoplasmic portion of the chain corresponds to 213 to 232 (DRYISIHRPLAYKRIVTRPK). The chain crosses the membrane as a helical span at residues 233-255 (AVVAFCLMWTIAIVIAVLPLLGW). At 256 to 273 (NCEKLQSVCSDIFPHIDE) the chain is on the extracellular side. The helical transmembrane segment at 274–299 (TYLMFWIGVTSVLLLFIVYAYMYILW) threads the bilayer. Over 300 to 344 (KAHSHAVRMIQRGTQKSIIIHTSEDGKVQVTRPDQARMDIRLAKT) the chain is Cytoplasmic. The chain crosses the membrane as a helical span at residues 345–365 (LVLILVVLIICWGPLLAIMVY). The Extracellular segment spans residues 366 to 377 (DVFGKMNKLIKT). A helical transmembrane segment spans residues 378–399 (VFAFCSMLCLLNSTVNPIIYAL). Residues 400–472 (RSKDLRHAFR…VSTDTSAEAL (73 aa)) are Cytoplasmic-facing. A lipid anchor (S-palmitoyl cysteine) is attached at cysteine 415. Serine 425 and serine 429 each carry phosphoserine.

It belongs to the G-protein coupled receptor 1 family. Interacts (via C-terminus) with CNRIP1; this interaction attenuates constitutive, but not agonist-dependent, inhibition of voltage-gated Ca(2+) channels in neurons. Associates with G protein alpha subunits, including G(i) alpha-1/GNAI1, G(i) alpha-3/GNAI3 and G(o)-alpha/GNAO1; palmitoylation is important for interaction with GNAI3 and GNAO1. Palmitoylation at Cys-415 is important for recruitment at plasma membrane and lipid rafts and association with G protein alpha subunits. Widely expressed, with highest levels in fetal and adult brain. Expression levels of isoform 2 and isoform 3 are much lower than those of isoform 1.

It is found in the cell membrane. It localises to the membrane raft. The protein resides in the mitochondrion outer membrane. Its subcellular location is the cell projection. The protein localises to the axon. It is found in the presynapse. With respect to regulation, hemopressin, a peptide derived from hemoglobin subunit alpha (HBA1 and/or HBA2), acts as an antagonist peptide: hemopressin-binding efficiently blocks cannabinoid receptor CNR1 and subsequent signaling. Its function is as follows. G-protein coupled receptor for endogenous cannabinoids (eCBs), including N-arachidonoylethanolamide (also called anandamide or AEA) and 2-arachidonoylglycerol (2-AG), as well as phytocannabinoids, such as delta(9)-tetrahydrocannabinol (THC). Mediates many cannabinoid-induced effects, acting, among others, on food intake, memory loss, gastrointestinal motility, catalepsy, ambulatory activity, anxiety, chronic pain. Signaling typically involves reduction in cyclic AMP. In the hypothalamus, may have a dual effect on mitochondrial respiration depending upon the agonist dose and possibly upon the cell type. Increases respiration at low doses, while decreases respiration at high doses. At high doses, CNR1 signal transduction involves G-protein alpha-i protein activation and subsequent inhibition of mitochondrial soluble adenylate cyclase, decrease in cyclic AMP concentration, inhibition of protein kinase A (PKA)-dependent phosphorylation of specific subunits of the mitochondrial electron transport system, including NDUFS2. In the hypothalamus, inhibits leptin-induced reactive oxygen species (ROS) formation and mediates cannabinoid-induced increase in SREBF1 and FASN gene expression. In response to cannabinoids, drives the release of orexigenic beta-endorphin, but not that of melanocyte-stimulating hormone alpha/alpha-MSH, from hypothalamic POMC neurons, hence promoting food intake. In the hippocampus, regulates cellular respiration and energy production in response to cannabinoids. Involved in cannabinoid-dependent depolarization-induced suppression of inhibition (DSI), a process in which depolarization of CA1 postsynaptic pyramidal neurons mobilizes eCBs, which retrogradely activate presynaptic CB1 receptors, transiently decreasing GABAergic inhibitory neurotransmission. Also reduces excitatory synaptic transmission. In superior cervical ganglions and cerebral vascular smooth muscle cells, inhibits voltage-gated Ca(2+) channels in a constitutive, as well as agonist-dependent manner. In cerebral vascular smooth muscle cells, cannabinoid-induced inhibition of voltage-gated Ca(2+) channels leads to vasodilation and decreased vascular tone. Induces leptin production in adipocytes and reduces LRP2-mediated leptin clearance in the kidney, hence participating in hyperleptinemia. In adipose tissue, CNR1 signaling leads to increased expression of SREBF1, ACACA and FASN genes. In the liver, activation by endocannabinoids leads to increased de novo lipogenesis and reduced fatty acid catabolism, associated with increased expression of SREBF1/SREBP-1, GCK, ACACA, ACACB and FASN genes. May also affect de novo cholesterol synthesis and HDL-cholesteryl ether uptake. Peripherally modulates energy metabolism. In high carbohydrate diet-induced obesity, may decrease the expression of mitochondrial dihydrolipoyl dehydrogenase/DLD in striated muscles, as well as that of selected glucose/ pyruvate metabolic enzymes, hence affecting energy expenditure through mitochondrial metabolism. In response to cannabinoid anandamide, elicits a pro-inflammatory response in macrophages, which involves NLRP3 inflammasome activation and IL1B and IL18 secretion. In macrophages infiltrating pancreatic islets, this process may participate in the progression of type-2 diabetes and associated loss of pancreatic beta-cells. Binds both 2-arachidonoylglycerol (2-AG) and anandamide. Functionally, only binds 2-arachidonoylglycerol (2-AG) with high affinity. Contrary to its effect on isoform 1, 2-AG behaves as an inverse agonist on isoform 2 in assays measuring GTP binding to membranes. In terms of biological role, only binds 2-arachidonoylglycerol (2-AG) with high affinity. Contrary to its effect on isoform 1, 2-AG behaves as an inverse agonist on isoform 3 in assays measuring GTP binding to membranes. The sequence is that of Cannabinoid receptor 1 (CNR1) from Homo sapiens (Human).